The following is a 376-amino-acid chain: Glutamate 5-kinase (376 aa).

Lys-15 contributes to the ATP binding site. 3 residues coordinate substrate: Ser-56, Asp-143, and Asn-155. 175-176 contacts ATP; sequence SD. Residues 281-358 enclose the PUA domain; the sequence is KGTLTIDAGA…PDVMSILGIT (78 aa).

It belongs to the glutamate 5-kinase family.

It localises to the cytoplasm. It catalyses the reaction L-glutamate + ATP = L-glutamyl 5-phosphate + ADP. The protein operates within amino-acid biosynthesis; L-proline biosynthesis; L-glutamate 5-semialdehyde from L-glutamate: step 1/2. In terms of biological role, catalyzes the transfer of a phosphate group to glutamate to form L-glutamate 5-phosphate. The protein is Glutamate 5-kinase of Rhodopseudomonas palustris (strain BisB18).